The chain runs to 698 residues: Probable threonine--tRNA ligase 2, cytoplasmic (698 aa).

The TGS domain maps to Gly-38–Glu-100. The interval Asn-541–Asn-560 is disordered.

It belongs to the class-II aminoacyl-tRNA synthetase family.

It is found in the cytoplasm. It catalyses the reaction tRNA(Thr) + L-threonine + ATP = L-threonyl-tRNA(Thr) + AMP + diphosphate + H(+). This chain is Probable threonine--tRNA ligase 2, cytoplasmic (thrS2), found in Dictyostelium discoideum (Social amoeba).